A 386-amino-acid chain; its full sequence is Leupaxin (386 aa).

Position 1 is an N-acetylmethionine (Met-1). The LD motif 1 motif lies at 3–15; sequence ELDALLEELERCT. Residue Ser-19 is modified to Phosphoserine. Residues 19 to 52 form a disordered region; that stretch reads SEEYSNPVSCHLDQQSTEESKIPQTPKTLSSQGN. Tyr-22 is modified (phosphotyrosine). The span at 22–52 shows a compositional bias: polar residues; that stretch reads YSNPVSCHLDQQSTEESKIPQTPKTLSSQGN. The residue at position 54 (Ser-54) is a Phosphoserine. Position 62 is a phosphotyrosine (Tyr-62). 2 consecutive short sequence motifs (LD motif) follow at residues 70–82 and 92–103; these read NVYS…KESV and QLDELMAHLSEM. Position 72 is a phosphotyrosine; by LYN (Tyr-72). Ser-81 bears the Phosphoserine mark. LIM zinc-binding domains lie at 150–208, 209–267, 268–326, and 327–386; these read GYCA…RLFS, PRCA…AMFS, PKCG…HRRG, and TLCH…LFSQ.

Belongs to the paxillin family. Interacts with unphosphorylated ITGA4. Interacts with AR and SRF. Interacts with PTK2B/PYK2, PTPN22 and PTPN12. Interacts (via LD motif 3) with LYN and the interaction is induced upon B-cell antigen receptor (BCR) activation. Interacts (via LD motif 3) with PTK2/FAK. In terms of processing, phosphorylated on tyrosine residues. Phosphorylation on Tyr-72 is important for its inhibitory function. Bombesin stimulates phosphorylation on Tyr-22, Tyr-62 and Tyr-72. As to expression, expressed in osteoclasts (at protein level). Highly expressed in vascular smooth muscle.

The protein resides in the cytoplasm. Its subcellular location is the cell junction. It localises to the focal adhesion. It is found in the nucleus. The protein localises to the perinuclear region. The protein resides in the cell projection. Its subcellular location is the podosome. It localises to the cell membrane. Functionally, transcriptional coactivator for androgen receptor (AR) and serum response factor (SRF). Contributes to the regulation of cell adhesion, spreading and cell migration and acts as a negative regulator in integrin-mediated cell adhesion events. Suppresses the integrin-induced tyrosine phosphorylation of paxillin (PXN). May play a critical role as an adapter protein in the formation of the adhesion zone in osteoclasts. Negatively regulates B-cell antigen receptor (BCR) signaling. The protein is Leupaxin (Lpxn) of Mus musculus (Mouse).